Reading from the N-terminus, the 300-residue chain is Ribonuclease HIII (300 aa).

The region spanning Ile83–Lys300 is the RNase H type-2 domain. Asp89, Glu90, and Asp194 together coordinate a divalent metal cation.

It belongs to the RNase HII family. RnhC subfamily. The cofactor is Mn(2+). Mg(2+) is required as a cofactor.

It is found in the cytoplasm. The enzyme catalyses Endonucleolytic cleavage to 5'-phosphomonoester.. Functionally, endonuclease that specifically degrades the RNA of RNA-DNA hybrids. The polypeptide is Ribonuclease HIII (Streptococcus pyogenes serotype M28 (strain MGAS6180)).